The primary structure comprises 621 residues: Laccase-2 (621 aa).

A signal peptide spans 1-23 (MMKSFFSAAALLLGLVAPSAVLA). Positions 24-48 (APSLPGVPREVTRDLLRPVEERQSS) are excised as a propeptide. A disulfide bridge connects residues C49 and C57. Plastocyanin-like domains lie at 78-201 (TRTY…IVVN) and 210-367 (IDLG…LPTN). N133 is a glycosylation site (N-linked (GlcNAc...) asparagine). Residues H138, H140, H183, and H185 each coordinate Cu cation. Cystine bridges form between C159/C586 and C343/C377. Residues N261, N276, N289, N325, and N334 are each glycosylated (N-linked (GlcNAc...) asparagine). Residues N401, N421, and N441 are each glycosylated (N-linked (GlcNAc...) asparagine). A Plastocyanin-like 3 domain is found at 430-566 (DKPIVDYVIA…GGLSVQYLER (137 aa)). Cu cation is bound by residues H476, H479, H481, H548, C549, H550, and H554. Residues 606 to 621 (KVKKWVGEHPDWYIKN) constitute a propeptide that is removed on maturation.

Belongs to the multicopper oxidase family. In terms of assembly, monomer. Requires Cu cation as cofactor. Post-translationally, proteolytically processed at both its N-terminus and its C-terminus.

The protein localises to the secreted. It catalyses the reaction 4 hydroquinone + O2 = 4 benzosemiquinone + 2 H2O. In terms of biological role, probably involved in lignin degradation and in the detoxification of lignin-derived products in its natural habitat (herbivorous dung), which is rich in lignin of grasses and straw. Probably involved in melanin synthesis and in perithecia development. The chain is Laccase-2 (LAC2) from Podospora anserina (Pleurage anserina).